The primary structure comprises 237 residues: Ribonuclease PH (237 aa).

Phosphate-binding positions include R86 and 124-126 (GTR).

Belongs to the RNase PH family. Homohexameric ring arranged as a trimer of dimers.

It catalyses the reaction tRNA(n+1) + phosphate = tRNA(n) + a ribonucleoside 5'-diphosphate. Functionally, phosphorolytic 3'-5' exoribonuclease that plays an important role in tRNA 3'-end maturation. Removes nucleotide residues following the 3'-CCA terminus of tRNAs; can also add nucleotides to the ends of RNA molecules by using nucleoside diphosphates as substrates, but this may not be physiologically important. Probably plays a role in initiation of 16S rRNA degradation (leading to ribosome degradation) during starvation. In Rhodopseudomonas palustris (strain ATCC BAA-98 / CGA009), this protein is Ribonuclease PH.